The sequence spans 193 residues: GTP-binding protein rhoA (193 aa).

A GTP-binding site is contributed by 12–19 (GDGACGKT). The Effector region signature appears at 34-42 (YVPTVFENY). GTP is bound by residues 59-63 (DTAGQ) and 117-120 (CKKD). The residue at position 190 (cysteine 190) is a Cysteine methyl ester. The S-geranylgeranyl cysteine moiety is linked to residue cysteine 190. Positions 191-193 (SIL) are cleaved as a propeptide — removed in mature form.

The protein belongs to the small GTPase superfamily. Rho family.

The protein localises to the cell membrane. Its function is as follows. Has a role in cell polarity, primary and secondary germ tube emergence and cell wall deposition. The sequence is that of GTP-binding protein rhoA (rhoA) from Emericella nidulans (strain FGSC A4 / ATCC 38163 / CBS 112.46 / NRRL 194 / M139) (Aspergillus nidulans).